We begin with the raw amino-acid sequence, 384 residues long: 1-deoxy-D-xylulose 5-phosphate reductoisomerase (384 aa).

Residues Thr10, Gly11, Ser12, Ile13, Arg37, Asn38, and Asn124 each coordinate NADPH. Lys125 is a binding site for 1-deoxy-D-xylulose 5-phosphate. Glu126 provides a ligand contact to NADPH. Asp150 lines the Mn(2+) pocket. 4 residues coordinate 1-deoxy-D-xylulose 5-phosphate: Ser151, Glu152, Ser176, and His199. Glu152 serves as a coordination point for Mn(2+). Position 205 (Gly205) interacts with NADPH. Ser212, Asn217, Lys218, and Glu221 together coordinate 1-deoxy-D-xylulose 5-phosphate. Glu221 contacts Mn(2+).

It belongs to the DXR family. Mg(2+) is required as a cofactor. It depends on Mn(2+) as a cofactor.

The catalysed reaction is 2-C-methyl-D-erythritol 4-phosphate + NADP(+) = 1-deoxy-D-xylulose 5-phosphate + NADPH + H(+). It participates in isoprenoid biosynthesis; isopentenyl diphosphate biosynthesis via DXP pathway; isopentenyl diphosphate from 1-deoxy-D-xylulose 5-phosphate: step 1/6. Functionally, catalyzes the NADPH-dependent rearrangement and reduction of 1-deoxy-D-xylulose-5-phosphate (DXP) to 2-C-methyl-D-erythritol 4-phosphate (MEP). The polypeptide is 1-deoxy-D-xylulose 5-phosphate reductoisomerase (Clostridium perfringens (strain SM101 / Type A)).